The primary structure comprises 320 residues: Aspartate carbamoyltransferase catalytic subunit (320 aa).

2 residues coordinate carbamoyl phosphate: Arg70 and Thr71. Lys98 serves as a coordination point for L-aspartate. Positions 120, 149, and 152 each coordinate carbamoyl phosphate. Arg182 and Arg237 together coordinate L-aspartate. Residues Gly278 and Pro279 each coordinate carbamoyl phosphate.

Belongs to the aspartate/ornithine carbamoyltransferase superfamily. ATCase family. As to quaternary structure, heterododecamer (2C3:3R2) of six catalytic PyrB chains organized as two trimers (C3), and six regulatory PyrI chains organized as three dimers (R2).

It carries out the reaction carbamoyl phosphate + L-aspartate = N-carbamoyl-L-aspartate + phosphate + H(+). The protein operates within pyrimidine metabolism; UMP biosynthesis via de novo pathway; (S)-dihydroorotate from bicarbonate: step 2/3. Catalyzes the condensation of carbamoyl phosphate and aspartate to form carbamoyl aspartate and inorganic phosphate, the committed step in the de novo pyrimidine nucleotide biosynthesis pathway. This is Aspartate carbamoyltransferase catalytic subunit from Ruthia magnifica subsp. Calyptogena magnifica.